A 243-amino-acid polypeptide reads, in one-letter code: tRNA (guanine-N(1)-)-methyltransferase (243 aa).

S-adenosyl-L-methionine is bound by residues G111 and 131-136; that span reads IGDYVL.

The protein belongs to the RNA methyltransferase TrmD family. In terms of assembly, homodimer.

The protein resides in the cytoplasm. It carries out the reaction guanosine(37) in tRNA + S-adenosyl-L-methionine = N(1)-methylguanosine(37) in tRNA + S-adenosyl-L-homocysteine + H(+). Functionally, specifically methylates guanosine-37 in various tRNAs. This is tRNA (guanine-N(1)-)-methyltransferase from Brevibacillus brevis (strain 47 / JCM 6285 / NBRC 100599).